We begin with the raw amino-acid sequence, 349 residues long: MNGTEGNNFYVPLSNRTGLVRSPFEYPQYYLAEPWQFKLLAVYMFFLICLGLPINGLTLICTAQHKKLRQPLNFILVNLAVAGAIMVCFGFTVTFYTAINGYFALGPTGCAVEGFMATLGGEVALWSLVVLAIERYIVVCKPMGSFKFSSTHASAGIAFTWVMAMACAAPPLVGWSRYIPEGIQCSCGPDYYTLNPEYNNESYVLYMFICHFILPVTIIFFTYGRLVCTVKAAAAQQQDSASTQKAEREVTKMVILMVLGFLVAWTPYATVAAWIFFNKGAAFSAQFMAIPAFFSKTSALYNPVIYVLLNKQFRSCMLTTLFCGKNPLGDEESSTVSTSKTEVSSVSPA.

Topologically, residues 1–36 (MNGTEGNNFYVPLSNRTGLVRSPFEYPQYYLAEPWQ) are extracellular. N-linked (GlcNAc...) asparagine glycosylation is found at asparagine 2 and asparagine 15. The chain crosses the membrane as a helical span at residues 37-61 (FKLLAVYMFFLICLGLPINGLTLIC). At 62-73 (TAQHKKLRQPLN) the chain is on the cytoplasmic side. The helical transmembrane segment at 74–99 (FILVNLAVAGAIMVCFGFTVTFYTAI) threads the bilayer. At 100 to 113 (NGYFALGPTGCAVE) the chain is on the extracellular side. Cysteine 110 and cysteine 187 are oxidised to a cystine. Residues 114 to 133 (GFMATLGGEVALWSLVVLAI) form a helical membrane-spanning segment. Over 134-152 (ERYIVVCKPMGSFKFSSTH) the chain is Cytoplasmic. Residues 153–176 (ASAGIAFTWVMAMACAAPPLVGWS) traverse the membrane as a helical segment. The Extracellular segment spans residues 177–202 (RYIPEGIQCSCGPDYYTLNPEYNNES). A helical membrane pass occupies residues 203–230 (YVLYMFICHFILPVTIIFFTYGRLVCTV). Residues 231–252 (KAAAAQQQDSASTQKAEREVTK) are Cytoplasmic-facing. The helical transmembrane segment at 253 to 276 (MVILMVLGFLVAWTPYATVAAWIF) threads the bilayer. At 277-284 (FNKGAAFS) the chain is on the extracellular side. A helical membrane pass occupies residues 285 to 309 (AQFMAIPAFFSKTSALYNPVIYVLL). The residue at position 296 (lysine 296) is an N6-(retinylidene)lysine. The Cytoplasmic portion of the chain corresponds to 310 to 349 (NKQFRSCMLTTLFCGKNPLGDEESSTVSTSKTEVSSVSPA). The disordered stretch occupies residues 329–349 (GDEESSTVSTSKTEVSSVSPA). Low complexity predominate over residues 334 to 349 (STVSTSKTEVSSVSPA).

It belongs to the G-protein coupled receptor 1 family. Opsin subfamily. Phosphorylated on some or all of the serine and threonine residues present in the C-terminal region. The color pigments are found in the cone photoreceptor cells.

The protein localises to the membrane. Its function is as follows. Visual pigments are the light-absorbing molecules that mediate vision. They consist of an apoprotein, opsin, covalently linked to cis-retinal. This is Green-sensitive opsin-2 from Carassius auratus (Goldfish).